A 27-amino-acid chain; its full sequence is Urumin (27 aa).

In terms of tissue distribution, expressed by the skin glands.

It is found in the secreted. Functionally, amphibian peptide that shows viricidal activity against human H1N1 influenza A virus. It specifically targets the conserved stalk region of H1 hemagglutinin, and acts by actively destroying influenza virions. It shows a reduced activity on human H3N2 influenza A virus and no activity against other viruses (HIV, SIV, HSV-II, hepatitis C, Ebola, Zika, and Dengue viruses). In vivo, the peptide also protects mice infected with mouse-adapted influenza virus from lethal influenza infection. The peptide synthesized in D-amino acids is inactive. The polypeptide is Urumin (Hydrophylax bahuvistara (Wide-spread fungoid frog)).